The primary structure comprises 373 residues: Dual-specificity RNA methyltransferase RlmN (373 aa).

E94 functions as the Proton acceptor in the catalytic mechanism. Residues 100-339 enclose the Radical SAM core domain; the sequence is EDDRATLCVS…VIVRKTRGDD (240 aa). A disulfide bridge connects residues C107 and C344. [4Fe-4S] cluster-binding residues include C114, C118, and C121. Residues 168–169, S200, 222–224, and N301 contribute to the S-adenosyl-L-methionine site; these read GE and SIH. C344 serves as the catalytic S-methylcysteine intermediate.

It belongs to the radical SAM superfamily. RlmN family. Requires [4Fe-4S] cluster as cofactor.

It localises to the cytoplasm. It catalyses the reaction adenosine(2503) in 23S rRNA + 2 reduced [2Fe-2S]-[ferredoxin] + 2 S-adenosyl-L-methionine = 2-methyladenosine(2503) in 23S rRNA + 5'-deoxyadenosine + L-methionine + 2 oxidized [2Fe-2S]-[ferredoxin] + S-adenosyl-L-homocysteine. It carries out the reaction adenosine(37) in tRNA + 2 reduced [2Fe-2S]-[ferredoxin] + 2 S-adenosyl-L-methionine = 2-methyladenosine(37) in tRNA + 5'-deoxyadenosine + L-methionine + 2 oxidized [2Fe-2S]-[ferredoxin] + S-adenosyl-L-homocysteine. Its function is as follows. Specifically methylates position 2 of adenine 2503 in 23S rRNA and position 2 of adenine 37 in tRNAs. m2A2503 modification seems to play a crucial role in the proofreading step occurring at the peptidyl transferase center and thus would serve to optimize ribosomal fidelity. This chain is Dual-specificity RNA methyltransferase RlmN, found in Shewanella sp. (strain ANA-3).